The sequence spans 1089 residues: Protein phosphatase 1 regulatory subunit 3A (1089 aa).

Residues 32–57 are disordered; it reads KATFKPGFSPQPSRRGSGSSEDMYLD. Residues 37–51 show a composition bias toward low complexity; it reads PGFSPQPSRRGSGSS. 2 positions are modified to phosphoserine; by GSK3: Ser-40 and Ser-44. Residues Ser-48 and Ser-51 each carry the phosphoserine modification. Position 58 is a phosphothreonine (Thr-58). The PP1-binding motif signature appears at 64–67; it reads RRVS. Ser-67 is modified (phosphoserine; by PKA). The region spanning 123 to 231 is the CBM21 domain; it reads EQLQVQKAVL…NNNGTNYILV (109 aa). Disordered stretches follow at residues 385-420, 479-501, and 566-649; these read FYHSRSSSPGNEYGHPHSEEIISDMGEKGPSLGDTS, HGDSTKLEESNASSRDDYAKVDN, and PCPS…SDIA. Over residues 581–600 the composition is skewed to polar residues; it reads SGSNLEPGTSDLSSPRNFSP. Basic and acidic residues predominate over residues 602 to 614; sequence TDDHLFQADRENS. The span at 615 to 625 shows a compositional bias: polar residues; the sequence is DSSNPENQNMN. Residue Ser-821 is modified to Phosphoserine. A disordered region spans residues 949–968; sequence IMKSGSGGERGGGPILQQKE. The span at 953 to 962 shows a compositional bias: gly residues; sequence GSGGERGGGP. Residues 1047–1067 form a helical membrane-spanning segment; that stretch reads LLFLIFLATVYYYDLMIGLAF.

Interacts with PPP1CC catalytic subunit of PP1, and associates with glycogen. Post-translationally, phosphorylation at Ser-48 by ISPK stimulates the dephosphorylation of glycogen synthase and phosphorylase kinase. As to expression, skeletal muscle and heart.

It localises to the membrane. Its function is as follows. Seems to act as a glycogen-targeting subunit for PP1. PP1 is essential for cell division, and participates in the regulation of glycogen metabolism, muscle contractility and protein synthesis. Plays an important role in glycogen synthesis but is not essential for insulin activation of glycogen synthase. In Mus musculus (Mouse), this protein is Protein phosphatase 1 regulatory subunit 3A (Ppp1r3a).